We begin with the raw amino-acid sequence, 206 residues long: MELKLLNEQGQPASTLDASDVLFAREYNEALVHQVVTAYLANARSGNRAQKGRSEIAKSTRKPFRQKGTGNARAGMASSPLWRGGGKIFPNSPDENFSQKVNRKMYRAGVAAILSQLAREDRLAVVDNFSVEAPKTRLLAEKLKGMGLDSVLVITDGLDENLFLSSRNLHKVLVLDVHETDPVSLVRFPKVLVTKGALAKMEEAWQ.

The disordered stretch occupies residues 47–94 (NRAQKGRSEIAKSTRKPFRQKGTGNARAGMASSPLWRGGGKIFPNSPD).

This sequence belongs to the universal ribosomal protein uL4 family. Part of the 50S ribosomal subunit.

Its function is as follows. One of the primary rRNA binding proteins, this protein initially binds near the 5'-end of the 23S rRNA. It is important during the early stages of 50S assembly. It makes multiple contacts with different domains of the 23S rRNA in the assembled 50S subunit and ribosome. In terms of biological role, forms part of the polypeptide exit tunnel. This Azoarcus sp. (strain BH72) protein is Large ribosomal subunit protein uL4.